The chain runs to 103 residues: MLLSSIVSFVADAAVVSTSIACLRHFTGFSLLRPANKIKNDKIRTGLLVYLNSGELIFNKGLEMVRNSSIKSLSSDSNRNIIDNSNNNQHPSSSSTSTSWKKF.

Positions 1 to 13 (MLLSSIVSFVADA) are cleaved as a signal peptide. The N-linked (GlcNAc...) asparagine glycan is linked to asparagine 67. The segment at 73–103 (LSSDSNRNIIDNSNNNQHPSSSSTSTSWKKF) is disordered.

It is found in the secreted. This is an uncharacterized protein from Dictyostelium discoideum (Social amoeba).